The chain runs to 227 residues: Cytochrome c oxidase subunit 2 (227 aa).

Residues 1 to 26 (MATWSNFNLQNSASPLMEQIIFFHDH) are Mitochondrial intermembrane-facing. Residues 27–51 (TLVILIMITILVGYLMISLFFNSYI) traverse the membrane as a helical segment. Over 52 to 62 (NRFLLEGQMIE) the chain is Mitochondrial matrix. Residues 63–81 (LIWTILPAITLIFIALPSL) form a helical membrane-spanning segment. Residues 82-227 (RLLYLLDELN…NFINWINNYS (146 aa)) lie on the Mitochondrial intermembrane side of the membrane. Residues histidine 161, cysteine 196, glutamate 198, cysteine 200, histidine 204, and methionine 207 each coordinate Cu cation. Glutamate 198 provides a ligand contact to Mg(2+).

Belongs to the cytochrome c oxidase subunit 2 family. As to quaternary structure, component of the cytochrome c oxidase (complex IV, CIV), a multisubunit enzyme composed of a catalytic core of 3 subunits and several supernumerary subunits. The complex exists as a monomer or a dimer and forms supercomplexes (SCs) in the inner mitochondrial membrane with ubiquinol-cytochrome c oxidoreductase (cytochrome b-c1 complex, complex III, CIII). Requires Cu cation as cofactor.

It localises to the mitochondrion inner membrane. The catalysed reaction is 4 Fe(II)-[cytochrome c] + O2 + 8 H(+)(in) = 4 Fe(III)-[cytochrome c] + 2 H2O + 4 H(+)(out). Functionally, component of the cytochrome c oxidase, the last enzyme in the mitochondrial electron transport chain which drives oxidative phosphorylation. The respiratory chain contains 3 multisubunit complexes succinate dehydrogenase (complex II, CII), ubiquinol-cytochrome c oxidoreductase (cytochrome b-c1 complex, complex III, CIII) and cytochrome c oxidase (complex IV, CIV), that cooperate to transfer electrons derived from NADH and succinate to molecular oxygen, creating an electrochemical gradient over the inner membrane that drives transmembrane transport and the ATP synthase. Cytochrome c oxidase is the component of the respiratory chain that catalyzes the reduction of oxygen to water. Electrons originating from reduced cytochrome c in the intermembrane space (IMS) are transferred via the dinuclear copper A center (CU(A)) of subunit 2 and heme A of subunit 1 to the active site in subunit 1, a binuclear center (BNC) formed by heme A3 and copper B (CU(B)). The BNC reduces molecular oxygen to 2 water molecules using 4 electrons from cytochrome c in the IMS and 4 protons from the mitochondrial matrix. The protein is Cytochrome c oxidase subunit 2 (COII) of Choristoneura fumiferana (Spruce budworm moth).